The following is a 353-amino-acid chain: Photosystem II protein D1 (353 aa).

An N-acetylthreonine modification is found at threonine 2. Position 2 is a phosphothreonine (threonine 2). 3 helical membrane-spanning segments follow: residues 29 to 46 (YIGW…TATS), 118 to 133 (HFLL…EWEL), and 142 to 156 (WIAV…AATA). Histidine 118 lines the chlorophyll a pocket. Tyrosine 126 is a pheophytin a binding site. Residues aspartate 170 and glutamate 189 each coordinate [CaMn4O5] cluster. A helical membrane pass occupies residues 197–218 (FHMLGVAGVFGGSLFSAMHGSL). Residue histidine 198 participates in chlorophyll a binding. A quinone contacts are provided by residues histidine 215 and 264-265 (SF). Residue histidine 215 coordinates Fe cation. Histidine 272 contacts Fe cation. A helical membrane pass occupies residues 274–288 (FLAAWPVVGIWFTAL). [CaMn4O5] cluster contacts are provided by histidine 332, glutamate 333, aspartate 342, and alanine 344. The propeptide occupies 345-353 (SIEAPLVNG).

This sequence belongs to the reaction center PufL/M/PsbA/D family. In terms of assembly, PSII is composed of 1 copy each of membrane proteins PsbA, PsbB, PsbC, PsbD, PsbE, PsbF, PsbH, PsbI, PsbJ, PsbK, PsbL, PsbM, PsbT, PsbX, PsbY, PsbZ, Psb30/Ycf12, at least 3 peripheral proteins of the oxygen-evolving complex and a large number of cofactors. It forms dimeric complexes. The cofactor is The D1/D2 heterodimer binds P680, chlorophylls that are the primary electron donor of PSII, and subsequent electron acceptors. It shares a non-heme iron and each subunit binds pheophytin, quinone, additional chlorophylls, carotenoids and lipids. D1 provides most of the ligands for the Mn4-Ca-O5 cluster of the oxygen-evolving complex (OEC). There is also a Cl(-1) ion associated with D1 and D2, which is required for oxygen evolution. The PSII complex binds additional chlorophylls, carotenoids and specific lipids.. In terms of processing, tyr-161 forms a radical intermediate that is referred to as redox-active TyrZ, YZ or Y-Z. Post-translationally, C-terminally processed by CTPA; processing is essential to allow assembly of the oxygen-evolving complex and thus photosynthetic growth.

The protein resides in the plastid. The protein localises to the chloroplast thylakoid membrane. It catalyses the reaction 2 a plastoquinone + 4 hnu + 2 H2O = 2 a plastoquinol + O2. Photosystem II (PSII) is a light-driven water:plastoquinone oxidoreductase that uses light energy to abstract electrons from H(2)O, generating O(2) and a proton gradient subsequently used for ATP formation. It consists of a core antenna complex that captures photons, and an electron transfer chain that converts photonic excitation into a charge separation. The D1/D2 (PsbA/PsbD) reaction center heterodimer binds P680, the primary electron donor of PSII as well as several subsequent electron acceptors. The chain is Photosystem II protein D1 from Psilotum nudum (Whisk fern).